Here is a 512-residue protein sequence, read N- to C-terminus: Sodium/proline symporter (512 aa).

13 helical membrane-spanning segments follow: residues 16–36 (WQTY…GFYG), 54–74 (IGPY…WMIM), 85–105 (LSAM…YFVV), 139–159 (IISG…GFVS), 174–194 (FGLI…GYLA), 200–220 (FFQG…AMMN), 240–260 (LFKG…LGYF), 286–306 (ISWM…GIAF), 327–347 (VLFH…AIMS), 381–401 (FVMI…AIAW), 410–430 (LVGN…LFAL), 438–458 (AGAV…IAWI), and 467–487 (IFGL…TYVV).

It belongs to the sodium:solute symporter (SSF) (TC 2.A.21) family.

It localises to the cell membrane. The enzyme catalyses L-proline(in) + Na(+)(in) = L-proline(out) + Na(+)(out). Functionally, catalyzes the sodium-dependent uptake of extracellular L-proline. Since most S.aureus strains are L-proline auxotrophs, this transporter may aid the bacterial persistence during an infection of tissues with low proline concentrations. This Staphylococcus aureus (strain Newman) protein is Sodium/proline symporter (putP).